Reading from the N-terminus, the 253-residue chain is 5'/3'-nucleotidase SurE (253 aa).

A divalent metal cation-binding residues include aspartate 8, aspartate 9, serine 39, and asparagine 92.

This sequence belongs to the SurE nucleotidase family. Requires a divalent metal cation as cofactor.

Its subcellular location is the cytoplasm. It carries out the reaction a ribonucleoside 5'-phosphate + H2O = a ribonucleoside + phosphate. It catalyses the reaction a ribonucleoside 3'-phosphate + H2O = a ribonucleoside + phosphate. The enzyme catalyses [phosphate](n) + H2O = [phosphate](n-1) + phosphate + H(+). Its function is as follows. Nucleotidase with a broad substrate specificity as it can dephosphorylate various ribo- and deoxyribonucleoside 5'-monophosphates and ribonucleoside 3'-monophosphates with highest affinity to 3'-AMP. Also hydrolyzes polyphosphate (exopolyphosphatase activity) with the preference for short-chain-length substrates (P20-25). Might be involved in the regulation of dNTP and NTP pools, and in the turnover of 3'-mononucleotides produced by numerous intracellular RNases (T1, T2, and F) during the degradation of various RNAs. The sequence is that of 5'/3'-nucleotidase SurE from Shigella boydii serotype 18 (strain CDC 3083-94 / BS512).